A 517-amino-acid polypeptide reads, in one-letter code: MASRGGNQSSDRQREHTPERGMGSASHPPPRPDRSPSQSPPPLPPKRNTYRRVGSNSSIESQVVLVSETSRSSLSPERSNSPPPIPPKKKPRKTKHVPLQDISQDSEEEREQVQLVRVGFSYPPVRIIEKDGKRSVEKIDNNDPISKGATSIAVRNPLSLPLVSAWEKGMEVMAVLMERYRLDNDLRTSFKLMPEQHEQYKRICHQYVNEEHRGIPLTFSSMKTLTAMMGRFMQGLVHSYSEIAHNNWECTGCALWAHGCTDYEGKVKCLHGTIMIQKDHIIEMDVASENGQRAMKENPDRAKITQNRWGRNVVQLANNDARCCVNDANCATNQFSSKSCGMFYTEGIKAQEAFKQYEAFMKAVYPGITPDQARMMLIPIHCDCNHKPGCAPVMGRQTCKMTPFGMANAEDLDVATISDPTVLASVRHPALMVFQCCNPVYRNSRVQNAGPNCDFKISAPDLLGALQLTRKLWQDTFPEIPVPKLVIPEFKWQNRLQFRNVSLPAGHYDSRQNPFDF.

Positions 1–10 (MASRGGNQSS) are enriched in polar residues. The segment at 1-110 (MASRGGNQSS…DISQDSEEER (110 aa)) is disordered. Positions 64–80 (VLVSETSRSSLSPERSN) are enriched in low complexity. Basic residues predominate over residues 87 to 96 (PKKKPRKTKH). Tyrosine 180 carries the post-translational modification Phosphotyrosine; by host. Residues cysteine 269 and histidine 271 each contribute to the Zn(2+) site. The interval 282 to 316 (IEMDVASENGQRAMKENPDRAKITQNRWGRNVVQL) is flexible loop. Residues cysteine 324, cysteine 340, cysteine 382, cysteine 384, cysteine 436, and cysteine 453 each coordinate Zn(2+). A C-terminal arm, DBP binding region spans residues 501–517 (VSLPAGHYDSRQNPFDF).

Belongs to the adenoviridae E2A DNA-binding protein family. In terms of assembly, homomultimerizes on viral ssDNA bound to pTP. Forms a initiation complex with viral polymerase, pTP and hosts NFIA and POU2F1/OCT1. Interacts with host SRCAP.

It is found in the host nucleus. Functionally, plays a role in the elongation phase of viral strand displacement replication by unwinding the template in an ATP-independent fashion, employing its capacity to form multimers. Also enhances the rate of initiation. Released from template upon second strand synthesis. Assembles in complex with viral pTP, viral pol, host NFIA and host POU2F1/OCT1 on viral origin of replication. Covers the whole ssDNA genome during synthesis. The complementary strand synthesis induces its relese from DNA template. May inhibit cellular transcription mediated by the interaction between host SRCAP and CBP. The sequence is that of DNA-binding protein from Human adenovirus B serotype 7 (HAdV-7).